The following is a 164-amino-acid chain: Lipoprotein signal peptidase (164 aa).

Helical transmembrane passes span 6 to 26, 39 to 59, 65 to 85, and 88 to 108; these read LGVL…LWLL, VLPF…GWFS, GQIL…IWMA, and TTKL…GNAI. Active-site residues include aspartate 118 and aspartate 140. The helical transmembrane segment at 141–161 threads the bilayer; it reads VAIVVGVAALLYDSLIGLPAA.

This sequence belongs to the peptidase A8 family.

Its subcellular location is the cell inner membrane. It carries out the reaction Release of signal peptides from bacterial membrane prolipoproteins. Hydrolyzes -Xaa-Yaa-Zaa-|-(S,diacylglyceryl)Cys-, in which Xaa is hydrophobic (preferably Leu), and Yaa (Ala or Ser) and Zaa (Gly or Ala) have small, neutral side chains.. Its pathway is protein modification; lipoprotein biosynthesis (signal peptide cleavage). Functionally, this protein specifically catalyzes the removal of signal peptides from prolipoproteins. The polypeptide is Lipoprotein signal peptidase (Rhodopseudomonas palustris (strain ATCC BAA-98 / CGA009)).